The chain runs to 249 residues: DNA polymerase sliding clamp (249 aa).

Belongs to the PCNA family. In terms of assembly, homotrimer. The subunits circularize to form a toroid; DNA passes through its center. Replication factor C (RFC) is required to load the toroid on the DNA.

In terms of biological role, sliding clamp subunit that acts as a moving platform for DNA processing. Responsible for tethering the catalytic subunit of DNA polymerase and other proteins to DNA during high-speed replication. The protein is DNA polymerase sliding clamp of Methanococcus vannielii (strain ATCC 35089 / DSM 1224 / JCM 13029 / OCM 148 / SB).